We begin with the raw amino-acid sequence, 461 residues long: Na(+)/H(+) antiporter NhaA (461 aa).

A disordered region spans residues 1 to 23 (MILSTQRLGRFMSPAPTPAPDAK). 12 helical membrane passes run 48–68 (VGGALLVAAAVIALIWANSPV), 89–109 (LSLGAWAADGLLAIFFFLVGL), 127–147 (IVPVAAAAGGVLVPALIYAAV), 157–177 (GWAIPTATDIAFAVAVLAIIG), 186–206 (IFLLTLAVVDDLIAISIIAFF), 211–231 (IQAAPLLLALIPLALYAFLAQ), 236–256 (FFGAHFMAAWAILLPLGIVTW), 257–277 (ALVHASGIHATVAGVLLGFAV), 305–325 (ISAGVAVPIFAFFSAGVAVGG), 339–359 (IGIIMALVLGKPIGIMGTTWI), 374–394 (WIDVFGVSLLAGIGFTVSLLV), and 408–428 (HAKVGILAASLLAAILATVVL).

The protein belongs to the NhaA Na(+)/H(+) (TC 2.A.33) antiporter family.

Its subcellular location is the cell membrane. The catalysed reaction is Na(+)(in) + 2 H(+)(out) = Na(+)(out) + 2 H(+)(in). In terms of biological role, na(+)/H(+) antiporter that extrudes sodium in exchange for external protons. This is Na(+)/H(+) antiporter NhaA from Arthrobacter sp. (strain FB24).